The following is a 577-amino-acid chain: Aspartate--tRNA(Asp/Asn) ligase (577 aa).

Glu-171 provides a ligand contact to L-aspartate. Residues 195 to 198 (QLFK) are aspartate. Arg-217 contacts L-aspartate. Residues 217–219 (RDE) and Gln-226 each bind ATP. Residue His-444 participates in L-aspartate binding. An ATP-binding site is contributed by Glu-474. An L-aspartate-binding site is contributed by Arg-481. ATP is bound at residue 526-529 (GFDR).

This sequence belongs to the class-II aminoacyl-tRNA synthetase family. Type 1 subfamily. As to quaternary structure, homodimer.

Its subcellular location is the cytoplasm. It carries out the reaction tRNA(Asx) + L-aspartate + ATP = L-aspartyl-tRNA(Asx) + AMP + diphosphate. Functionally, aspartyl-tRNA synthetase with relaxed tRNA specificity since it is able to aspartylate not only its cognate tRNA(Asp) but also tRNA(Asn). Is 1.7 times more efficient at aminoacylating tRNA(Asp) over tRNA(Asn). Reaction proceeds in two steps: L-aspartate is first activated by ATP to form Asp-AMP and then transferred to the acceptor end of tRNA(Asp/Asn). In Helicobacter pylori (strain ATCC 700392 / 26695) (Campylobacter pylori), this protein is Aspartate--tRNA(Asp/Asn) ligase.